Consider the following 459-residue polypeptide: GTPase Der (459 aa).

EngA-type G domains follow at residues 4 to 169 (PLVA…PEVT) and 179 to 355 (IAVS…AAHR). GTP-binding positions include 10 to 17 (GRPNVGKS), 57 to 61 (DTGGL), 120 to 123 (NKCE), 185 to 192 (GRPNVGKS), 232 to 236 (DTAGI), and 297 to 300 (NKWD). The 86-residue stretch at 356-441 (KRVPTAVVNE…PIRFLWRGKS (86 aa)) folds into the KH-like domain.

Belongs to the TRAFAC class TrmE-Era-EngA-EngB-Septin-like GTPase superfamily. EngA (Der) GTPase family. In terms of assembly, associates with the 50S ribosomal subunit.

Functionally, GTPase that plays an essential role in the late steps of ribosome biogenesis. This Synechococcus sp. (strain JA-2-3B'a(2-13)) (Cyanobacteria bacterium Yellowstone B-Prime) protein is GTPase Der.